Here is a 273-residue protein sequence, read N- to C-terminus: Shikimate dehydrogenase (NADP(+)) (273 aa).

Shikimate contacts are provided by residues 15–17 (SQS) and threonine 62. Lysine 66 acts as the Proton acceptor in catalysis. Residue glutamate 78 participates in NADP(+) binding. Shikimate-binding residues include asparagine 87 and aspartate 102. Residues 127–131 (GAGGA), 151–156 (NRTVTK), and methionine 215 contribute to the NADP(+) site. Shikimate is bound at residue tyrosine 217. Residue glycine 239 coordinates NADP(+).

This sequence belongs to the shikimate dehydrogenase family. As to quaternary structure, homodimer.

It carries out the reaction shikimate + NADP(+) = 3-dehydroshikimate + NADPH + H(+). It functions in the pathway metabolic intermediate biosynthesis; chorismate biosynthesis; chorismate from D-erythrose 4-phosphate and phosphoenolpyruvate: step 4/7. Its function is as follows. Involved in the biosynthesis of the chorismate, which leads to the biosynthesis of aromatic amino acids. Catalyzes the reversible NADPH linked reduction of 3-dehydroshikimate (DHSA) to yield shikimate (SA). The chain is Shikimate dehydrogenase (NADP(+)) from Laribacter hongkongensis (strain HLHK9).